The primary structure comprises 475 residues: Ribulose bisphosphate carboxylase large chain (475 aa).

Residues 1 to 2 (MS) constitute a propeptide that is removed on maturation. Pro-3 carries the post-translational modification N-acetylproline. The residue at position 14 (Lys-14) is an N6,N6,N6-trimethyllysine. 2 residues coordinate substrate: Asn-123 and Thr-173. Lys-175 functions as the Proton acceptor in the catalytic mechanism. Lys-177 is a substrate binding site. Residues Lys-201, Asp-203, and Glu-204 each contribute to the Mg(2+) site. Lys-201 bears the N6-carboxylysine mark. The active-site Proton acceptor is the His-294. The substrate site is built by Arg-295, His-327, and Ser-379.

It belongs to the RuBisCO large chain family. Type I subfamily. As to quaternary structure, heterohexadecamer of 8 large chains and 8 small chains; disulfide-linked. The disulfide link is formed within the large subunit homodimers. The cofactor is Mg(2+). The disulfide bond which can form in the large chain dimeric partners within the hexadecamer appears to be associated with oxidative stress and protein turnover.

The protein localises to the plastid. It localises to the chloroplast. The enzyme catalyses 2 (2R)-3-phosphoglycerate + 2 H(+) = D-ribulose 1,5-bisphosphate + CO2 + H2O. It carries out the reaction D-ribulose 1,5-bisphosphate + O2 = 2-phosphoglycolate + (2R)-3-phosphoglycerate + 2 H(+). RuBisCO catalyzes two reactions: the carboxylation of D-ribulose 1,5-bisphosphate, the primary event in carbon dioxide fixation, as well as the oxidative fragmentation of the pentose substrate in the photorespiration process. Both reactions occur simultaneously and in competition at the same active site. The polypeptide is Ribulose bisphosphate carboxylase large chain (Gossypium hirsutum (Upland cotton)).